The sequence spans 252 residues: Glucosamine-6-phosphate deaminase (252 aa).

The active-site Proton acceptor; for enolization step is the D67. The active-site For ring-opening step is the N137. H139 acts as the Proton acceptor; for ring-opening step in catalysis. E144 serves as the catalytic For ring-opening step.

The protein belongs to the glucosamine/galactosamine-6-phosphate isomerase family. NagB subfamily.

The catalysed reaction is alpha-D-glucosamine 6-phosphate + H2O = beta-D-fructose 6-phosphate + NH4(+). The protein operates within amino-sugar metabolism; N-acetylneuraminate degradation; D-fructose 6-phosphate from N-acetylneuraminate: step 5/5. Its function is as follows. Catalyzes the reversible isomerization-deamination of glucosamine 6-phosphate (GlcN6P) to form fructose 6-phosphate (Fru6P) and ammonium ion. This chain is Glucosamine-6-phosphate deaminase, found in Staphylococcus aureus (strain bovine RF122 / ET3-1).